The chain runs to 205 residues: Large ribosomal subunit protein uL4 (205 aa).

Residues 44–79 form a disordered region; sequence RAGTKAQKTRREVSGGGAKPWRQKGTGRARAGSSRS.

Belongs to the universal ribosomal protein uL4 family. In terms of assembly, part of the 50S ribosomal subunit.

One of the primary rRNA binding proteins, this protein initially binds near the 5'-end of the 23S rRNA. It is important during the early stages of 50S assembly. It makes multiple contacts with different domains of the 23S rRNA in the assembled 50S subunit and ribosome. Its function is as follows. Forms part of the polypeptide exit tunnel. This chain is Large ribosomal subunit protein uL4, found in Coxiella burnetii (strain RSA 331 / Henzerling II).